The chain runs to 338 residues: Large ribosomal subunit protein uL10 (338 aa).

Over residues 298–308 (AAQQTQTQQST) the composition is skewed to low complexity. A disordered region spans residues 298–338 (AAQQTQTQQSTAEEKKEEKKEEEKKGPSEEEIGSGLASLFG). The segment covering 309–325 (AEEKKEEKKEEEKKGPS) has biased composition (basic and acidic residues).

Belongs to the universal ribosomal protein uL10 family. Part of the 50S ribosomal subunit. Forms part of the ribosomal stalk which helps the ribosome interact with GTP-bound translation factors. Forms a heptameric L10(L12)2(L12)2(L12)2 complex, where L10 forms an elongated spine to which the L12 dimers bind in a sequential fashion.

In terms of biological role, forms part of the ribosomal stalk, playing a central role in the interaction of the ribosome with GTP-bound translation factors. This Saccharolobus islandicus (strain M.16.27) (Sulfolobus islandicus) protein is Large ribosomal subunit protein uL10.